Consider the following 40-residue polypeptide: Cell division inhibitor MciZ (40 aa).

In terms of assembly, interacts with FtsZ. Binds to the C-terminal polymerization interface of FtsZ. Binds to FtsZ filaments.

With respect to regulation, highly effective in inhibiting polymerization at low and intermediate concentrations of GTP and only partially effective at high GTP concentrations. Its function is as follows. Blocks Z-ring formation in the mother cell during sporulation by inhibiting the polymerization of FtsZ. Binds to the minus end of FtsZ and functions as a filament-capping protein. At high concentrations, is capable of both capping and sequestration of FtsZ. Decreases the GTPase activity of FtsZ. This is Cell division inhibitor MciZ from Bacillus subtilis (strain 168).